The primary structure comprises 168 residues: Nicotinamide-nucleotide adenylyltransferase (168 aa).

Belongs to the archaeal NMN adenylyltransferase family.

The protein resides in the cytoplasm. The catalysed reaction is beta-nicotinamide D-ribonucleotide + ATP + H(+) = diphosphate + NAD(+). Its pathway is cofactor biosynthesis; NAD(+) biosynthesis; NAD(+) from nicotinamide D-ribonucleotide: step 1/1. This is Nicotinamide-nucleotide adenylyltransferase from Methanosphaerula palustris (strain ATCC BAA-1556 / DSM 19958 / E1-9c).